The chain runs to 366 residues: Isocitrate dehydrogenase [NAD] subunit alpha, mitochondrial (366 aa).

A mitochondrion-targeting transit peptide spans 1–27 (MAGSAWVSKVSRLLGAFHNTKQVTRGF). Lys77 bears the N6-succinyllysine mark. Thr101 is modified (phosphothreonine). Residues Arg115, Arg125, and Arg146 each coordinate substrate. An N6-acetyllysine modification is found at Lys223. Asp233, Asp257, and Asp261 together coordinate Mg(2+). At Lys343 the chain carries N6-acetyllysine; alternate. The residue at position 343 (Lys343) is an N6-succinyllysine; alternate. Lys350 bears the N6-succinyllysine mark.

Belongs to the isocitrate and isopropylmalate dehydrogenases family. In terms of assembly, heterooligomer of subunits alpha (IDH3A), beta (IDH3B), and gamma (IDH3G) in the apparent ratio of 2:1:1. The heterodimer containing one IDH3A and one IDH3B subunit and the heterodimer containing one IDH3A and one IDH3G subunit assemble into a heterotetramer (which contains two subunits of IDH3A, one of IDH3B and one of IDH3G) and further into the heterooctamer. Mg(2+) serves as cofactor. The cofactor is Mn(2+). As to expression, expressed in brown adipose tissue (BAT).

It localises to the mitochondrion. The enzyme catalyses D-threo-isocitrate + NAD(+) = 2-oxoglutarate + CO2 + NADH. The heterotetramer and the heterodimer composed of IDH3A and IDH3G subunits can be allosterically activated by citrate (CIT) or/and ADP, and the two activators can act independently or synergistically. The heterodimer composed of IDH3A and IDH3B subunits cannot be allosterically regulated and the allosteric regulation of the heterotetramer is through the IDH3G subunit and not the IDH3B subunit. The IDH3G subunit contains the allosteric site which consists of a CIT-binding site and an ADP-binding site, and the binding of CIT and ADP causes conformational changes at the allosteric site which are transmitted to the active site in the catalytic subunit (IDH3A) through a cascade of conformational changes at the heterodimer interface, leading to stabilization of the isocitrate-binding at the active site and thus activation of the enzyme. ATP can activate the heterotetramer and the heterodimer composed of IDH3A and IDH3G subunits at low concentrations but inhibits their activities at high concentrations, whereas ATP exhibits only inhibitory effect on the heterodimer composed of IDH3A and IDH3B subunits. Catalytic subunit of the enzyme which catalyzes the decarboxylation of isocitrate (ICT) into alpha-ketoglutarate. The heterodimer composed of the alpha (IDH3A) and beta (IDH3B) subunits and the heterodimer composed of the alpha (IDH3A) and gamma (IDH3G) subunits, have considerable basal activity but the full activity of the heterotetramer (containing two subunits of IDH3A, one of IDH3B and one of IDH3G) requires the assembly and cooperative function of both heterodimers. In Rattus norvegicus (Rat), this protein is Isocitrate dehydrogenase [NAD] subunit alpha, mitochondrial.